The following is a 175-amino-acid chain: ATP synthase subunit b, chloroplastic (175 aa).

Residues 24–46 (VLNLAVVLAIVLTYVGDALRGLL) form a helical membrane-spanning segment.

It belongs to the ATPase B chain family. As to quaternary structure, F-type ATPases have 2 components, F(1) - the catalytic core - and F(0) - the membrane proton channel. F(1) has five subunits: alpha(3), beta(3), gamma(1), delta(1), epsilon(1). F(0) has four main subunits: a(1), b(1), b'(1) and c(10-14). The alpha and beta chains form an alternating ring which encloses part of the gamma chain. F(1) is attached to F(0) by a central stalk formed by the gamma and epsilon chains, while a peripheral stalk is formed by the delta, b and b' chains.

It localises to the plastid. It is found in the chloroplast thylakoid membrane. Its function is as follows. F(1)F(0) ATP synthase produces ATP from ADP in the presence of a proton or sodium gradient. F-type ATPases consist of two structural domains, F(1) containing the extramembraneous catalytic core and F(0) containing the membrane proton channel, linked together by a central stalk and a peripheral stalk. During catalysis, ATP synthesis in the catalytic domain of F(1) is coupled via a rotary mechanism of the central stalk subunits to proton translocation. Component of the F(0) channel, it forms part of the peripheral stalk, linking F(1) to F(0). The protein is ATP synthase subunit b, chloroplastic of Chlorella vulgaris (Green alga).